The following is a 228-amino-acid chain: Isonitrile hydratase (228 aa).

The active site involves Cys-101.

As to quaternary structure, homodimer.

The catalysed reaction is N-cyclohexylformamide = cyclohexyl isocyanide + H2O. Sensitive to thiol reagents and oxidizing reagents, but is not influenced by chelators or reducing reagents. Functionally, catalyzes the hydration of cyclohexyl isocyanide to N-cyclohexylformamide. Acts on various isonitriles, but not on nitriles or amides. Probably involved in detoxification. The protein is Isonitrile hydratase (inhA) of Pseudomonas putida (Arthrobacter siderocapsulatus).